The following is a 457-amino-acid chain: Bifunctional protein GlmU (457 aa).

The pyrophosphorylase stretch occupies residues 1–230 (MPLSLPLHIV…AREVEGVNDL (230 aa)). UDP-N-acetyl-alpha-D-glucosamine is bound by residues 12–15 (LAAG), lysine 26, glutamine 78, 83–84 (GT), 105–107 (YGD), glycine 140, glutamate 155, asparagine 170, and asparagine 228. A Mg(2+)-binding site is contributed by aspartate 107. Mg(2+) is bound at residue asparagine 228. Residues 231–251 (WQLTQLERAWQIRAARALCLQ) are linker. The segment at 252–457 (GARVADPARL…DSWQRPKKKT (206 aa)) is N-acetyltransferase. Positions 334 and 352 each coordinate UDP-N-acetyl-alpha-D-glucosamine. Histidine 364 functions as the Proton acceptor in the catalytic mechanism. Positions 367 and 378 each coordinate UDP-N-acetyl-alpha-D-glucosamine. Acetyl-CoA contacts are provided by residues alanine 381, 387–388 (NY), serine 406, alanine 424, and arginine 441.

This sequence in the N-terminal section; belongs to the N-acetylglucosamine-1-phosphate uridyltransferase family. In the C-terminal section; belongs to the transferase hexapeptide repeat family. As to quaternary structure, homotrimer. The cofactor is Mg(2+).

The protein localises to the cytoplasm. It carries out the reaction alpha-D-glucosamine 1-phosphate + acetyl-CoA = N-acetyl-alpha-D-glucosamine 1-phosphate + CoA + H(+). The enzyme catalyses N-acetyl-alpha-D-glucosamine 1-phosphate + UTP + H(+) = UDP-N-acetyl-alpha-D-glucosamine + diphosphate. The protein operates within nucleotide-sugar biosynthesis; UDP-N-acetyl-alpha-D-glucosamine biosynthesis; N-acetyl-alpha-D-glucosamine 1-phosphate from alpha-D-glucosamine 6-phosphate (route II): step 2/2. It participates in nucleotide-sugar biosynthesis; UDP-N-acetyl-alpha-D-glucosamine biosynthesis; UDP-N-acetyl-alpha-D-glucosamine from N-acetyl-alpha-D-glucosamine 1-phosphate: step 1/1. Its pathway is bacterial outer membrane biogenesis; LPS lipid A biosynthesis. Its function is as follows. Catalyzes the last two sequential reactions in the de novo biosynthetic pathway for UDP-N-acetylglucosamine (UDP-GlcNAc). The C-terminal domain catalyzes the transfer of acetyl group from acetyl coenzyme A to glucosamine-1-phosphate (GlcN-1-P) to produce N-acetylglucosamine-1-phosphate (GlcNAc-1-P), which is converted into UDP-GlcNAc by the transfer of uridine 5-monophosphate (from uridine 5-triphosphate), a reaction catalyzed by the N-terminal domain. The sequence is that of Bifunctional protein GlmU from Xylella fastidiosa (strain 9a5c).